Reading from the N-terminus, the 700-residue chain is Polyribonucleotide nucleotidyltransferase (700 aa).

Residues Asp-485 and Asp-491 each coordinate Mg(2+). The region spanning 552-611 is the KH domain; it reads PRITTLKINPEKIRDVIGKGGATIRALTEETGTTIELEDDGTVKIASANGDATKEAIRRI. The S1 motif domain maps to 621 to 689; sequence GTVYNGKVVR…RQGRVRLSMK (69 aa).

This sequence belongs to the polyribonucleotide nucleotidyltransferase family. Component of the RNA degradosome, which is a multiprotein complex involved in RNA processing and mRNA degradation. It depends on Mg(2+) as a cofactor.

The protein resides in the cytoplasm. The catalysed reaction is RNA(n+1) + phosphate = RNA(n) + a ribonucleoside 5'-diphosphate. In terms of biological role, involved in mRNA degradation. Catalyzes the phosphorolysis of single-stranded polyribonucleotides processively in the 3'- to 5'-direction. The protein is Polyribonucleotide nucleotidyltransferase of Shewanella loihica (strain ATCC BAA-1088 / PV-4).